Reading from the N-terminus, the 391-residue chain is MKLLHRFFSNEASGGIILIIAAAAAMVFANLGATQGLYHAFLETPVELRVGVLEINKNMLLWINDALMAVFFLLVGLEVKRELVQGSLASRQRAAFPVIAAIGGMVVPALLYLAFNYQDPIARQGWAIPAATDIAFALGVLALLGSRVPVALKIFLMALAIIDDLGAIVIIALFYTSDLSILSLSVAAGAIAALALLNIFNVRRTGIYILVGVVLWTAVLKSGVHATLAGVIIGFFIPLKEQDGHSPAQQLEHVLHPWVAFMILPLFAFANAGVSLQGVTLSGLTSMLPMGIIAGLFIGKPLGISLFCWLALKLKLASLPQGTTFRQIMAVGVLCGIGFTMSIFISTLAFASMDPQLIVWAKLGILTGSLLAAFVGYSLLKVKLSGQVQPV.

11 consecutive transmembrane segments (helical) span residues 14–34 (GGIILIIAAAAAMVFANLGAT), 59–79 (MLLWINDALMAVFFLLVGLEV), 95–115 (AFPVIAAIGGMVVPALLYLAF), 125–145 (GWAIPAATDIAFALGVLALLG), 154–174 (IFLMALAIIDDLGAIVIIALF), 180–200 (SILSLSVAAGAIAALALLNIF), 219–239 (VLKSGVHATLAGVIIGFFIPL), 254–274 (VLHPWVAFMILPLFAFANAGV), 292–312 (IIAGLFIGKPLGISLFCWLAL), 328–348 (IMAVGVLCGIGFTMSIFISTL), and 357–377 (LIVWAKLGILTGSLLAAFVGY).

The protein belongs to the NhaA Na(+)/H(+) (TC 2.A.33) antiporter family.

It is found in the cell inner membrane. The catalysed reaction is Na(+)(in) + 2 H(+)(out) = Na(+)(out) + 2 H(+)(in). Functionally, na(+)/H(+) antiporter that extrudes sodium in exchange for external protons. This is Na(+)/H(+) antiporter NhaA from Enterobacter sp. (strain 638).